A 395-amino-acid chain; its full sequence is Immunity-related GTPase family M protein 2 (395 aa).

The region spanning asparagine 63–aspartate 239 is the IRG-type G domain. GTP is bound by residues aspartate 72–serine 79, threonine 97–arginine 101, and lysine 179–aspartate 181.

Belongs to the TRAFAC class dynamin-like GTPase superfamily. IRG family. Ubiquitinated; polyubiquitinated in the cytosol, promoting Gbp1 recruitment to the T.gondii parasitophorous vacuole membranes.

It localises to the cytoplasmic vesicle membrane. The protein localises to the golgi apparatus membrane. Its subcellular location is the cytoplasm. The protein resides in the cytosol. It carries out the reaction GTP + H2O = GDP + phosphate + H(+). In terms of biological role, immunity-related GTPase that plays important roles in innate immunity and inflammatory response. Acts as a dynamin-like protein that binds to intracellular membranes and promotes remodeling and trafficking of those membranes. Required for clearance of acute protozoan and bacterial infections. Acts by participating to Tgtp1/Irgb6 and Gbp1-mediated parasite killing by promoting their accumulation on the T.gondii parasitophorous vacuole membranes. Also required for prolonged loading of ubiquitin and p62/Sqstm1 to parasitophorous vacuole membranes. Also acts as a key negative regulator of the inflammatory response by inhibiting the non-canonical inflammasome, thereby protecting against Casp11-driven septic shock during endotoxemia. The sequence is that of Immunity-related GTPase family M protein 2 from Mus musculus (Mouse).